The primary structure comprises 166 residues: Large ribosomal subunit protein uL10 (166 aa).

Belongs to the universal ribosomal protein uL10 family. In terms of assembly, part of the ribosomal stalk of the 50S ribosomal subunit. The N-terminus interacts with L11 and the large rRNA to form the base of the stalk. The C-terminus forms an elongated spine to which L12 dimers bind in a sequential fashion forming a multimeric L10(L12)X complex.

Its function is as follows. Forms part of the ribosomal stalk, playing a central role in the interaction of the ribosome with GTP-bound translation factors. This chain is Large ribosomal subunit protein uL10, found in Streptococcus pneumoniae serotype 19F (strain G54).